We begin with the raw amino-acid sequence, 426 residues long: Serine hydroxymethyltransferase (426 aa).

Residues Leu-122 and 126-128 (GHL) each bind (6S)-5,6,7,8-tetrahydrofolate. Position 231 is an N6-(pyridoxal phosphate)lysine (Lys-231).

Belongs to the SHMT family. As to quaternary structure, homodimer. The cofactor is pyridoxal 5'-phosphate.

Its subcellular location is the cytoplasm. It catalyses the reaction (6R)-5,10-methylene-5,6,7,8-tetrahydrofolate + glycine + H2O = (6S)-5,6,7,8-tetrahydrofolate + L-serine. It participates in one-carbon metabolism; tetrahydrofolate interconversion. Its pathway is amino-acid biosynthesis; glycine biosynthesis; glycine from L-serine: step 1/1. Functionally, catalyzes the reversible interconversion of serine and glycine with tetrahydrofolate (THF) serving as the one-carbon carrier. This reaction serves as the major source of one-carbon groups required for the biosynthesis of purines, thymidylate, methionine, and other important biomolecules. Also exhibits THF-independent aldolase activity toward beta-hydroxyamino acids, producing glycine and aldehydes, via a retro-aldol mechanism. The chain is Serine hydroxymethyltransferase from Koribacter versatilis (strain Ellin345).